Reading from the N-terminus, the 734-residue chain is Methionine--tRNA ligase (734 aa).

The short motif at 12–22 (PYVNNIPHLGN) is the 'HIGH' region element. Zn(2+) is bound by residues Cys143, Cys146, Cys155, and Cys158. The short motif at 330–334 (KFSKS) is the 'KMSKS' region element. ATP is bound at residue Lys333. The tRNA-binding domain maps to 570 to 675 (FREKVLLRVV…QNPIAGERII (106 aa)).

Belongs to the class-I aminoacyl-tRNA synthetase family. MetG type 1 subfamily. Homodimer. The cofactor is Zn(2+).

The protein resides in the cytoplasm. The enzyme catalyses tRNA(Met) + L-methionine + ATP = L-methionyl-tRNA(Met) + AMP + diphosphate. Functionally, is required not only for elongation of protein synthesis but also for the initiation of all mRNA translation through initiator tRNA(fMet) aminoacylation. This is Methionine--tRNA ligase from Borreliella burgdorferi (strain ZS7) (Borrelia burgdorferi).